The chain runs to 352 residues: MALTVDVAGPAPWGFRITGGRDFHTPIMVTKVAERGKAKDADLRPGDIIVAINGESAEGMLHAEAQSKIRQSPSPLRLQLDRSQAASPGQTNGDSSLEVLATRFQGSVRTHTESHSSLRSSYSSPTSLSPRAGSPFSPPPFSSPLAGEAAISRSFQSLACSPGLPAADRLSYSGRPGSQQAGLGRAGDSAVLVLPPSPGPRSSRPSVDSEGGSLLLDEDSEVFKMLQENREGRAAPRQSSSFRLLQEALEAEERGGTPAFLPSSLSPQSSLPASRALATPPKLHTCEKCSTSIANQAVRIQEGRYRHPGCYTCADCGLNLKMRGHFWVGDELYCEKHARQRYSAPATLSSRA.

Residues 1 to 84 form the PDZ domain; it reads MALTVDVAGP…PLRLQLDRSQ (84 aa). Disordered regions lie at residues 69 to 95 and 108 to 141; these read IRQS…NGDS and VRTH…PPPF. A compositionally biased stretch (polar residues) spans 81 to 95; sequence DRSQAASPGQTNGDS. Residues 117-135 show a composition bias toward low complexity; the sequence is SLRSSYSSPTSLSPRAGSP. Serine 124 bears the Phosphoserine mark. Threonine 126 is subject to Phosphothreonine. Serine 127, serine 129, serine 134, serine 137, serine 143, serine 161, serine 197, serine 203, serine 213, and serine 266 each carry phosphoserine. 2 disordered regions span residues 170–214 and 253–275; these read LSYS…GGSL and ERGG…PASR. Positions 258 to 275 are enriched in low complexity; it reads PAFLPSSLSPQSSLPASR. Residues 284 to 344 form the LIM zinc-binding domain; sequence HTCEKCSTSI…EKHARQRYSA (61 aa).

As to quaternary structure, interacts with alpha-actinins ACTN1 and ACTN4, FLNA and MYH9. Interacts (via LIM zinc-binding domain) with MKRN2.

The protein resides in the cytoplasm. The protein localises to the cytoskeleton. Probable adapter protein located at the actin cytoskeleton that promotes cell attachment. Necessary for the migratory capacity of epithelial cells. Overexpression enhances cell adhesion to collagen and fibronectin and suppresses anchorage independent growth. May contribute to tumor cell migratory capacity. This is PDZ and LIM domain protein 2 (PDLIM2) from Macaca fascicularis (Crab-eating macaque).